Consider the following 167-residue polypeptide: Probable host range protein 2 (167 aa).

Belongs to the poxviridae C7 protein family.

Its function is as follows. Plays a role for multiplication of the virus in different cell types. The protein is Probable host range protein 2 of Yaba monkey tumor virus (strain VR587) (YMTV).